Consider the following 132-residue polypeptide: uncharacterized protein (132 aa).

The interval methionine 1–tyrosine 68 is disordered. The chain crosses the membrane as a helical span at residues valine 100–valine 120.

It belongs to the FAM241 family.

It is found in the membrane. This is an uncharacterized protein from Homo sapiens (Human).